The chain runs to 531 residues: Achacin (531 aa).

A signal peptide spans 1–22 (MLLLNSALFILCLVCWLPGTSS). The propeptide occupies 23-29 (SRVLTRR). Residues Asn112, Asn150, Asn308, and Asn392 are each glycosylated (N-linked (GlcNAc...) asparagine).

This sequence to A.kurodai aplysianin-A. Homodimer. Collar tissue.

In terms of biological role, antibacterial glycoprotein. In Lissachatina fulica (Giant African land snail), this protein is Achacin.